Here is a 289-residue protein sequence, read N- to C-terminus: Ribosomal RNA small subunit methyltransferase I (289 aa).

Belongs to the methyltransferase superfamily. RsmI family.

It localises to the cytoplasm. It carries out the reaction cytidine(1402) in 16S rRNA + S-adenosyl-L-methionine = 2'-O-methylcytidine(1402) in 16S rRNA + S-adenosyl-L-homocysteine + H(+). Its function is as follows. Catalyzes the 2'-O-methylation of the ribose of cytidine 1402 (C1402) in 16S rRNA. This chain is Ribosomal RNA small subunit methyltransferase I, found in Halalkalibacterium halodurans (strain ATCC BAA-125 / DSM 18197 / FERM 7344 / JCM 9153 / C-125) (Bacillus halodurans).